Consider the following 421-residue polypeptide: Imidazolonepropionase (421 aa).

Residues H81 and H83 each coordinate Fe(3+). H81 and H83 together coordinate Zn(2+). 4-imidazolone-5-propanoate-binding residues include R90, Y153, and H186. Y153 lines the N-formimidoyl-L-glutamate pocket. H251 provides a ligand contact to Fe(3+). H251 is a binding site for Zn(2+). E254 is a 4-imidazolone-5-propanoate binding site. A Fe(3+)-binding site is contributed by D326. D326 serves as a coordination point for Zn(2+). Positions 328 and 330 each coordinate N-formimidoyl-L-glutamate. S331 is a binding site for 4-imidazolone-5-propanoate.

Belongs to the metallo-dependent hydrolases superfamily. HutI family. The cofactor is Zn(2+). Fe(3+) serves as cofactor.

Its subcellular location is the cytoplasm. It catalyses the reaction 4-imidazolone-5-propanoate + H2O = N-formimidoyl-L-glutamate. Its pathway is amino-acid degradation; L-histidine degradation into L-glutamate; N-formimidoyl-L-glutamate from L-histidine: step 3/3. Functionally, catalyzes the hydrolytic cleavage of the carbon-nitrogen bond in imidazolone-5-propanoate to yield N-formimidoyl-L-glutamate. It is the third step in the universal histidine degradation pathway. The protein is Imidazolonepropionase of Streptococcus pyogenes serotype M6 (strain ATCC BAA-946 / MGAS10394).